The sequence spans 428 residues: Immunoglobulin superfamily containing leucine-rich repeat protein (428 aa).

The first 18 residues, 1-18 (MQELHLLWWALLLGLAQA), serve as a signal peptide directing secretion. In terms of domain architecture, LRRNT spans 19-50 (CPEPCDCGEKYGFQIADCAYRDLEAVPPGFPA). N-linked (GlcNAc...) asparagine glycosylation is present at Asn-51. 5 LRR repeats span residues 51-72 (NVTA…AFRE), 75-96 (LLQS…ALAS), 99-122 (HLKS…HNLS), 123-144 (ALQL…AFRS), and 147-168 (ALRS…TFTP). The LRRCT domain maps to 180–231 (NPFDCTCGIVWLKTWALATAVSIPEQDNIACTSPHVLKGTPLSRLPPLPCSA). The Ig-like domain occupies 232–343 (PSVQLSYQPS…GSAESSVDVA (112 aa)). A disulfide bridge connects residues Cys-257 and Cys-327. Asn-309 carries an N-linked (GlcNAc...) asparagine glycan.

Its subcellular location is the secreted. This chain is Immunoglobulin superfamily containing leucine-rich repeat protein (ISLR), found in Pongo abelii (Sumatran orangutan).